The chain runs to 183 residues: Glutathione-regulated potassium-efflux system ancillary protein KefG (183 aa).

This sequence belongs to the NAD(P)H dehydrogenase (quinone) family. KefG subfamily. Interacts with KefB.

The protein localises to the cell inner membrane. It carries out the reaction a quinone + NADH + H(+) = a quinol + NAD(+). The catalysed reaction is a quinone + NADPH + H(+) = a quinol + NADP(+). In terms of biological role, regulatory subunit of a potassium efflux system that confers protection against electrophiles. Required for full activity of KefB. This chain is Glutathione-regulated potassium-efflux system ancillary protein KefG, found in Pectobacterium carotovorum subsp. carotovorum (strain PC1).